The chain runs to 327 residues: Movement protein (327 aa).

Positions 297-327 (IASSSSTENELARVSQNIDLLKNKLKEICGE) form a coiled coil.

Belongs to the caulimoviridae movement protein family. Homotrimer, through the coiled-coil domain. Interacts with VAP. May interact (via N-terminus) with host prenylated Rab acceptor protein 1D (PRA1D).

The protein localises to the host cell junction. It is found in the host plasmodesma. Transports viral genome to neighboring plant cells directly through plasmosdesmata, without any budding. The movement protein allows efficient cell to cell propagation, by bypassing the host cell wall barrier. Acts by forming tubules structures that increase the size exclusion limit (SEL) of plasmodesmata, thereby allowing viral ribonucleocapsids to spread directly to neighboring cells. The sequence is that of Movement protein from Cauliflower mosaic virus (strain D/H) (CaMV).